Consider the following 430-residue polypeptide: Adenylosuccinate synthetase (430 aa).

GTP contacts are provided by residues 13–19 (GDEGKGK) and 41–43 (GHT). Asp-14 functions as the Proton acceptor in the catalytic mechanism. Mg(2+) is bound by residues Asp-14 and Gly-41. IMP is bound by residues 14–17 (DEGK), 39–42 (NAGH), Thr-130, Arg-144, Gln-225, Thr-240, and Arg-304. The active-site Proton donor is the His-42. A substrate-binding site is contributed by 300-306 (ASTGRPR). Residues Arg-306, 332–334 (KLD), and 414–416 (STG) each bind GTP.

It belongs to the adenylosuccinate synthetase family. In terms of assembly, homodimer. Mg(2+) is required as a cofactor.

The protein localises to the cytoplasm. It carries out the reaction IMP + L-aspartate + GTP = N(6)-(1,2-dicarboxyethyl)-AMP + GDP + phosphate + 2 H(+). Its pathway is purine metabolism; AMP biosynthesis via de novo pathway; AMP from IMP: step 1/2. In terms of biological role, plays an important role in the de novo pathway of purine nucleotide biosynthesis. Catalyzes the first committed step in the biosynthesis of AMP from IMP. This is Adenylosuccinate synthetase from Stenotrophomonas maltophilia (strain R551-3).